The sequence spans 184 residues: Der GTPase-activating protein YihI (184 aa).

Disordered stretches follow at residues 1-106 (MNRP…PTMS) and 159-184 (LGDDDEEEQQEDMLQLLKRNNPKDAL). A compositionally biased stretch (basic and acidic residues) spans 8–32 (VADKAEKSKVKRKTREELEREARER). Residues 159-169 (LGDDDEEEQQE) show a composition bias toward acidic residues.

This sequence belongs to the YihI family. In terms of assembly, interacts with Der.

Its function is as follows. A GTPase-activating protein (GAP) that modifies Der/EngA GTPase function. May play a role in ribosome biogenesis. This Pectobacterium atrosepticum (strain SCRI 1043 / ATCC BAA-672) (Erwinia carotovora subsp. atroseptica) protein is Der GTPase-activating protein YihI.